A 151-amino-acid polypeptide reads, in one-letter code: MTSLLLFGAGGLFDFDATLPLMALQVVLLTFILNALFFRPVGRVVEEREVYVTTSRAEAKQKLAEAEKLELELKEQLKSARIAAQQLIQEAEKDSEQLYREALAIANADANAAREKARREIDAQRDSALSQLKGDAEKLGDLIVNRLLAAK.

The chain crosses the membrane as a helical span at residues 18-38; it reads TLPLMALQVVLLTFILNALFF.

It belongs to the ATPase B chain family. As to quaternary structure, F-type ATPases have 2 components, F(1) - the catalytic core - and F(0) - the membrane proton channel. F(1) has five subunits: alpha(3), beta(3), gamma(1), delta(1), epsilon(1). F(0) has four main subunits: a(1), b(1), b'(1) and c(10-14). The alpha and beta chains form an alternating ring which encloses part of the gamma chain. F(1) is attached to F(0) by a central stalk formed by the gamma and epsilon chains, while a peripheral stalk is formed by the delta, b and b' chains.

It is found in the cellular thylakoid membrane. Functionally, f(1)F(0) ATP synthase produces ATP from ADP in the presence of a proton or sodium gradient. F-type ATPases consist of two structural domains, F(1) containing the extramembraneous catalytic core and F(0) containing the membrane proton channel, linked together by a central stalk and a peripheral stalk. During catalysis, ATP synthesis in the catalytic domain of F(1) is coupled via a rotary mechanism of the central stalk subunits to proton translocation. Its function is as follows. Component of the F(0) channel, it forms part of the peripheral stalk, linking F(1) to F(0). The b'-subunit is a diverged and duplicated form of b found in plants and photosynthetic bacteria. In Prochlorococcus marinus (strain MIT 9313), this protein is ATP synthase subunit b'.